The sequence spans 208 residues: Baseplate hub assembly protein gp26 (208 aa).

Positions 1 to 5 (MYEYK) are excised as a propeptide.

The protein localises to the virion. Functionally, baseplate hub assembly chaperone involved in the tail assembly. The sequence is that of Baseplate hub assembly protein gp26 (26) from Escherichia coli (Bacteriophage T4).